A 459-amino-acid polypeptide reads, in one-letter code: Putrescine aminotransferase (459 aa).

Pyridoxal 5'-phosphate-binding positions include 150–151 and Gln-274; that span reads GT. Lys-300 bears the N6-(pyridoxal phosphate)lysine mark. Residue Thr-332 participates in pyridoxal 5'-phosphate binding.

This sequence belongs to the class-III pyridoxal-phosphate-dependent aminotransferase family. Putrescine aminotransferase subfamily. Pyridoxal 5'-phosphate is required as a cofactor.

The enzyme catalyses an alkane-alpha,omega-diamine + 2-oxoglutarate = an omega-aminoaldehyde + L-glutamate. The catalysed reaction is putrescine + 2-oxoglutarate = 1-pyrroline + L-glutamate + H2O. It carries out the reaction cadaverine + 2-oxoglutarate = 5-aminopentanal + L-glutamate. Its pathway is amine and polyamine degradation; putrescine degradation; 4-aminobutanal from putrescine (transaminase route): step 1/1. Functionally, catalyzes the aminotransferase reaction from putrescine to 2-oxoglutarate, leading to glutamate and 4-aminobutanal, which spontaneously cyclizes to form 1-pyrroline. This is the first step in one of two pathways for putrescine degradation, where putrescine is converted into 4-aminobutanoate (gamma-aminobutyrate or GABA) via 4-aminobutanal. Also functions as a cadaverine transaminase in a a L-lysine degradation pathway to succinate that proceeds via cadaverine, glutarate and L-2-hydroxyglutarate. In Salmonella paratyphi B (strain ATCC BAA-1250 / SPB7), this protein is Putrescine aminotransferase.